The following is a 382-amino-acid chain: Flavin-dependent monooxygenase, oxygenase subunit HsaA (382 aa).

FMN-binding positions include tryptophan 72, 106 to 108 (SSY), 129 to 131 (WSS), arginine 251, 334 to 335 (AT), and 356 to 357 (HA).

It belongs to the HpaH/HsaA monooxygenase family. In terms of assembly, homotetramer. HsaAB monooxygenase consists of an oxygenase component HsaA and a reductase component HsaB.

The enzyme catalyses 3-hydroxy-9,10-secoandrosta-1,3,5(10)-triene-9,17-dione + FMNH2 + O2 = 3,4-dihydroxy-9,10-secoandrosta-1,3,5(10)-triene-9,17-dione + FMN + H2O + H(+). It functions in the pathway lipid metabolism; steroid biosynthesis. Its function is as follows. Catalyzes the o-hydroxylation of 3-hydroxy-9,10-secoandrosta-1,3,5(10)-triene-9,17-dione (3-HSA) to 3,4-dihydroxy-9,10-secoandrosta-1,3,5(10)-triene-9,17-dione (3,4-DHSA) in the catabolism of cholesterol. The chain is Flavin-dependent monooxygenase, oxygenase subunit HsaA (hsaA) from Rhodococcus jostii (strain RHA1).